Here is a 101-residue protein sequence, read N- to C-terminus: MAKKSMINRDIKRTKLVEKYKVKRLELKKIIKSINVSDEERFQATIKLQALPRDASPTRQRNRCALTGRPHGFYRKFGLARTKLRERTMNGEAPGLSKASW.

Belongs to the universal ribosomal protein uS14 family. As to quaternary structure, part of the 30S ribosomal subunit. Contacts proteins S3 and S10.

In terms of biological role, binds 16S rRNA, required for the assembly of 30S particles and may also be responsible for determining the conformation of the 16S rRNA at the A site. The polypeptide is Small ribosomal subunit protein uS14 (Ruthia magnifica subsp. Calyptogena magnifica).